The sequence spans 235 residues: Large ribosomal subunit protein uL4 (235 aa).

The disordered stretch occupies residues R45–H75. The segment covering W65–H75 has biased composition (basic residues).

Belongs to the universal ribosomal protein uL4 family. As to quaternary structure, part of the 50S ribosomal subunit.

In terms of biological role, one of the primary rRNA binding proteins, this protein initially binds near the 5'-end of the 23S rRNA. It is important during the early stages of 50S assembly. It makes multiple contacts with different domains of the 23S rRNA in the assembled 50S subunit and ribosome. Functionally, this protein only weakly controls expression of the E.coli S10 operon. It is incorporated into E.coli ribosomes, however it is not as firmly associated as the endogenous protein. Forms part of the polypeptide exit tunnel. This chain is Large ribosomal subunit protein uL4 (rplD), found in Thermotoga maritima (strain ATCC 43589 / DSM 3109 / JCM 10099 / NBRC 100826 / MSB8).